Here is a 1048-residue protein sequence, read N- to C-terminus: Anguibactin system regulator (1048 aa).

In terms of domain architecture, Carrier spans 965-1039 (PIITASEDRV…AFAIIMDRCR (75 aa)).

Belongs to the ATP-dependent AMP-binding enzyme family.

The protein operates within siderophore biosynthesis; anguibactin biosynthesis. Functionally, bifunctional protein that plays an essential role in virulence. Plays a role in both production of the siderophore anguibactin and regulation of iron transport genes. The sequence is that of Anguibactin system regulator (angR) from Vibrio anguillarum (strain ATCC 68554 / 775) (Listonella anguillarum).